The following is a 313-amino-acid chain: Pyrimidine-specific ribonucleoside hydrolase RihB (313 aa).

Catalysis depends on Glu-11, which acts as the Proton acceptor. Ca(2+) is bound by residues Glu-11, Asp-16, and Val-124. Residues Gln-227 and His-239 each coordinate substrate. Asp-240 provides a ligand contact to Ca(2+).

This sequence belongs to the IUNH family. RihB subfamily. As to quaternary structure, homotetramer. The cofactor is Ca(2+).

The catalysed reaction is a pyrimidine ribonucleoside + H2O = a pyrimidine nucleobase + D-ribose. Functionally, hydrolyzes cytidine or uridine to ribose and cytosine or uracil, respectively. Has a clear preference for cytidine over uridine. Strictly specific for ribonucleosides. This Shigella flexneri serotype 5b (strain 8401) protein is Pyrimidine-specific ribonucleoside hydrolase RihB.